The chain runs to 299 residues: MGGPRALLAALWALEAAGTAALRIGAFNIQSFGDSKVSDPACGSIIAKILAGYDLALVQEVRDPDLSAVSALMEQINSVSEHEYSFVSSQPLGRDQYKEMYLFVYRKDAVSVVDTYLYPDPEDVFSREPFVVKFSAPGTGERAPPLPSRRALTPPPLPAAAQNLVLIPLHAAPHQAVAEIDALYDVYLDVIDKWGTDDMLFLGDFNADCSYVRAQDWAAIRLRSSEVFKWLIPDSADTTVGNSDCAYDRIVACGARLRRSLKPQSATVHDFQEEFGLDQTQALAISDHFPVEVTLKFHR.

The signal sequence occupies residues 1–20; sequence MGGPRALLAALWALEAAGTA. Catalysis depends on residues Glu-99 and His-170. A disulfide bridge links Cys-209 with Cys-245.

The protein belongs to the DNase I family. It depends on Mg(2+) as a cofactor. The cofactor is Ca(2+). Preferentially expressed in the skin and up-regulated during keratinocytes differentiation. Highly abundant (at protein level) in the stratum granulosum.

It localises to the cytoplasm. The protein localises to the secreted. Its function is as follows. Divalent cation-dependent acid DNA endonuclease involved in the breakdown of the nucleus during corneocyte formation of epidermal keratinocytes. May play an immune role by eliminating harmful DNA released into the extracellular environment by damaged epidermal cells. This is Deoxyribonuclease-1-like 2 (DNASE1L2) from Homo sapiens (Human).